A 514-amino-acid chain; its full sequence is Nitric oxide reductase transcription regulator NorR1 (514 aa).

Position 54 is a 4-aspartylphosphate (aspartate 54). In terms of domain architecture, Sigma-54 factor interaction spans 187–416 (IIGQSQAIAG…LEHVISRAAL (230 aa)). Residues 215 to 222 (GETGVGKE) and 287 to 296 (EVGELPLSIQ) each bind ATP. Residues 490–509 (WAKAARQLGMDASNLHKLAK) constitute a DNA-binding region (H-T-H motif).

Its pathway is nitrogen metabolism; nitrate reduction (denitrification) [regulation]. Required for the nitric oxide (NO) induced expression of NO reductase. Not required for expression of 2 other pathway members, nitrate reductase (nirS) and nitrous oxide reductase (nosZ). The protein is Nitric oxide reductase transcription regulator NorR1 (norR1) of Cupriavidus necator (strain ATCC 17699 / DSM 428 / KCTC 22496 / NCIMB 10442 / H16 / Stanier 337) (Ralstonia eutropha).